A 447-amino-acid polypeptide reads, in one-letter code: N-succinylarginine dihydrolase (447 aa).

Substrate-binding positions include 19–28 (AGLSFGNEAS), asparagine 110, and 137–138 (HR). Glutamate 174 is an active-site residue. Residue arginine 212 coordinates substrate. The active site involves histidine 248. 2 residues coordinate substrate: aspartate 250 and asparagine 359. Residue cysteine 365 is the Nucleophile of the active site.

The protein belongs to the succinylarginine dihydrolase family. In terms of assembly, homodimer.

It carries out the reaction N(2)-succinyl-L-arginine + 2 H2O + 2 H(+) = N(2)-succinyl-L-ornithine + 2 NH4(+) + CO2. The protein operates within amino-acid degradation; L-arginine degradation via AST pathway; L-glutamate and succinate from L-arginine: step 2/5. Functionally, catalyzes the hydrolysis of N(2)-succinylarginine into N(2)-succinylornithine, ammonia and CO(2). The sequence is that of N-succinylarginine dihydrolase from Shigella boydii serotype 4 (strain Sb227).